The following is a 462-amino-acid chain: Cytochrome P450 20A1 (462 aa).

A helical membrane pass occupies residues 4-24; sequence FAIFAVTFLLALVGAVLYLYP. Cys-409 serves as a coordination point for heme.

The protein belongs to the cytochrome P450 family. Heme is required as a cofactor.

The protein resides in the membrane. This chain is Cytochrome P450 20A1 (CYP20A1), found in Bos taurus (Bovine).